Reading from the N-terminus, the 280-residue chain is Phosphonoacetaldehyde hydrolase (280 aa).

The Nucleophile role is filled by D23. Mg(2+)-binding residues include D23 and A25. The Schiff-base intermediate with substrate role is filled by K64. Position 197 (D197) interacts with Mg(2+).

Belongs to the HAD-like hydrolase superfamily. PhnX family. As to quaternary structure, homodimer. The cofactor is Mg(2+).

The enzyme catalyses phosphonoacetaldehyde + H2O = acetaldehyde + phosphate + H(+). Its function is as follows. Involved in phosphonate degradation. This is Phosphonoacetaldehyde hydrolase from Bordetella avium (strain 197N).